Here is a 226-residue protein sequence, read N- to C-terminus: UPF0758 protein SPD_0975 (226 aa).

The MPN domain occupies 103 to 225; the sequence is SILSSQKLAK…YFSYREKTDL (123 aa). Zn(2+) is bound by residues histidine 174, histidine 176, and aspartate 187. A JAMM motif motif is present at residues 174-187; it reads HNHPSGAVAPSQND.

The protein belongs to the UPF0758 family.

This Streptococcus pneumoniae serotype 2 (strain D39 / NCTC 7466) protein is UPF0758 protein SPD_0975.